The sequence spans 575 residues: Sodium/calcium exchanger NCL2 (575 aa).

Transmembrane regions (helical) follow at residues Phe-69–Leu-89, Ile-112–Val-132, and Val-146–Gly-166. A glycan (N-linked (GlcNAc...) asparagine) is linked at Asn-179. Transmembrane regions (helical) follow at residues Ile-210 to His-230 and Val-237 to Phe-257. 2 consecutive EF-hand domains span residues Pro-297–Glu-332 and Asn-337–Glu-372. Asn-298 is a glycosylation site (N-linked (GlcNAc...) asparagine). Positions 310, 312, 314, 316, 321, 350, 352, 354, and 361 each coordinate Ca(2+). 5 consecutive transmembrane segments (helical) span residues Trp-417–Ala-437, Phe-457–Ile-477, Val-494–Tyr-514, Phe-522–Phe-542, and Leu-548–Leu-568.

It belongs to the Ca(2+):cation antiporter (CaCA) (TC 2.A.19) family.

The protein resides in the cell membrane. In terms of biological role, may function as a sodium/calcium exchanger (NCX) and participate in the maintenance of calcium homeostasis. May play a role abiotic stress responses. The protein is Sodium/calcium exchanger NCL2 of Oryza sativa subsp. japonica (Rice).